The sequence spans 224 residues: PKHD-type hydroxylase Sbal_3634 (224 aa).

Positions glutamine 78–serine 176 constitute a Fe2OG dioxygenase domain. Residues histidine 96, aspartate 98, and histidine 157 each contribute to the Fe cation site. Arginine 167 contacts 2-oxoglutarate.

Requires Fe(2+) as cofactor. L-ascorbate serves as cofactor.

The polypeptide is PKHD-type hydroxylase Sbal_3634 (Shewanella baltica (strain OS155 / ATCC BAA-1091)).